Here is a 588-residue protein sequence, read N- to C-terminus: MTDKWVPGQGQPMYGSQQPHNLMPPPSGLYQQNSNQSNTSLDQQQQFNQQQYNSQQQYQQQQHSQYQQQQQQHQQQQQQQQQQQQQQQQQQQQQQQQHQQHQQQQQQPQQQSVAQQQPSDYVNFTPRPDLLSKTARDRAHNTTQVISTYYKGIVQHAIERHQRRSAAEASVEQATSEERRNRVLTNYGKKETAYLRMRRTRMALEDFVTVKVIGKGAFGEVRLVQKRDNGKIYAMKTMLKKEMDMKEQWAHVKAERDVLADSDSPWIVSLYFSFQDDLYLYLIMEFLPGGDLMTMLIKYDVFSEDITRFYIAECVLAIEAIHKLGFIHRDIKPDNILIDKTGHIKLSDFGLSTGFHKTHSSAYWKKLKDGTSSNPATQMGPPQNTNRQSTYDSIHLTMRQQISTWRKNRRLMAYSTVGTPDYIAPEIFVHQGYGQECDWWSLGAIMFECLVGWPPFCSEQPRETYHKIINWRETLQFPDDVHLSPESEDLIRRLLTSSENRLGRIGGANEIKSHPFFRGVDWSSIREFNAPFVPKLSSITDTSYFPTDELGDVSEYPQQSSRSDRSSDLPFIGYTFSRFDNMTRRNAI.

2 disordered regions span residues Met-1–Gln-76 and Gln-100–Ala-139. Residues Leu-29–Asp-42 are compositionally biased toward polar residues. Low complexity-rich tracts occupy residues Gln-43–Gln-76 and Gln-100–Gln-117. In terms of domain architecture, Protein kinase spans Phe-207–Phe-517. Residues Ile-213–Val-221 and Lys-236 contribute to the ATP site. Residue Asp-330 is the Proton acceptor of the active site. Positions Gly-370–Ser-389 are disordered. The region spanning Arg-518–Asn-586 is the AGC-kinase C-terminal domain.

Belongs to the protein kinase superfamily. STE Ser/Thr protein kinase family. COT1 subfamily.

It catalyses the reaction L-seryl-[protein] + ATP = O-phospho-L-seryl-[protein] + ADP + H(+). The catalysed reaction is L-threonyl-[protein] + ATP = O-phospho-L-threonyl-[protein] + ADP + H(+). Protein kinase that seems to play a role in the regulation of cell morphogenesis and proliferation. This chain is Serine/threonine-protein kinase CBK1 (CBK1), found in Yarrowia lipolytica (strain CLIB 122 / E 150) (Yeast).